Consider the following 473-residue polypeptide: Trehalose-6-phosphate synthase (473 aa).

Position 10 (R10) interacts with D-glucose 6-phosphate. 21–22 (GG) serves as a coordination point for UDP-alpha-D-glucose. 2 residues coordinate D-glucose 6-phosphate: Y76 and D130. Residues R262 and K267 each contribute to the UDP-alpha-D-glucose site. R300 is a binding site for D-glucose 6-phosphate. Residues F339 and 365 to 369 (LVAKE) each bind UDP-alpha-D-glucose. The disordered stretch occupies residues 454 to 473 (TPRSPERQQQNNVATFPKLA).

Belongs to the glycosyltransferase 20 family. As to quaternary structure, homotetramer.

The catalysed reaction is D-glucose 6-phosphate + UDP-alpha-D-glucose = alpha,alpha-trehalose 6-phosphate + UDP + H(+). Its pathway is glycan biosynthesis; trehalose biosynthesis. Probably involved in the osmoprotection via the biosynthesis of trehalose. Catalyzes the transfer of glucose from UDP-alpha-D-glucose (UDP-Glc) to D-glucose 6-phosphate (Glc-6-P) to form trehalose-6-phosphate. Acts with retention of the anomeric configuration of the UDP-sugar donor. The chain is Trehalose-6-phosphate synthase from Salmonella choleraesuis (strain SC-B67).